The following is a 444-amino-acid chain: Proline--tRNA ligase (444 aa).

It belongs to the class-II aminoacyl-tRNA synthetase family. ProS type 2 subfamily. In terms of assembly, homodimer.

The protein resides in the cytoplasm. The catalysed reaction is tRNA(Pro) + L-proline + ATP = L-prolyl-tRNA(Pro) + AMP + diphosphate. In terms of biological role, catalyzes the attachment of proline to tRNA(Pro) in a two-step reaction: proline is first activated by ATP to form Pro-AMP and then transferred to the acceptor end of tRNA(Pro). This Pelagibacter ubique (strain HTCC1062) protein is Proline--tRNA ligase.